The sequence spans 153 residues: Hydrogenase expression/formation protein HoxT (153 aa).

This sequence belongs to the HupJ family.

This Azotobacter vinelandii protein is Hydrogenase expression/formation protein HoxT (hoxT).